The primary structure comprises 145 residues: Immunity protein CdiI (145 aa).

Interacts with cognate toxin fragment CdiA-CT.

Its function is as follows. Immunity protein component of a toxin-immunity protein module, which functions as a cellular contact-dependent growth inhibition (CDI) system. CDI modules allow bacteria to communicate with and inhibit the growth of closely related neighboring bacteria in a contact-dependent fashion. Protects cells against the 16S rRNase activity of CdiA-CT, its cognate toxin protein, but not against the toxic effects of a similar rRNase, non-cognate CdiA-CT from E.chrysanthemi strain EC16. The protein is Immunity protein CdiI of Enterobacter cloacae subsp. cloacae (strain ATCC 13047 / DSM 30054 / NBRC 13535 / NCTC 10005 / WDCM 00083 / NCDC 279-56).